The following is a 46-amino-acid chain: Transcriptional regulator SEHBP (46 aa).

In terms of assembly, interacts with histone H2B. Also interacts with chromatin-binding proteins HMGN1 and HMGN3.

It localises to the nucleus. It is found in the cytoplasm. Its function is as follows. Plays a role in transcription regulation. The sequence is that of Transcriptional regulator SEHBP from Homo sapiens (Human).